Reading from the N-terminus, the 277-residue chain is Caspase-3 (277 aa).

Position 1 is an N-acetylmethionine (M1). 2 propeptides span residues 1-9 (MENTENSVD) and 10-28 (AKSF…KSMD). K11 is modified (N6-acetyllysine). S26 carries the post-translational modification Phosphoserine. Catalysis depends on residues H121 and C163. C163 is modified (S-nitrosocysteine; in inhibited form).

The protein belongs to the peptidase C14A family. In terms of assembly, heterotetramer that consists of two anti-parallel arranged heterodimers, each one formed by a 17 kDa (p17) and a 12 kDa (p12) subunit. Interacts with BIRC6/bruce. Cleavage by granzyme B, caspase-6, caspase-8 and caspase-10 generates the two active subunits. Additional processing of the propeptides is likely due to the autocatalytic activity of the activated protease. Active heterodimers between the small subunit of caspase-7 protease and the large subunit of caspase-3 also occur and vice versa. Post-translationally, S-nitrosylated on its catalytic site cysteine in unstimulated cell lines and denitrosylated upon activation of the Fas apoptotic pathway, associated with an increase in intracellular caspase activity. Fas therefore activates caspase-3 not only by inducing the cleavage of the caspase zymogen to its active subunits, but also by stimulating the denitrosylation of its active site thiol. In terms of processing, ubiquitinated by BIRC6; this activity is inhibited by DIABLO/SMAC.

The protein resides in the cytoplasm. It carries out the reaction Strict requirement for an Asp residue at positions P1 and P4. It has a preferred cleavage sequence of Asp-Xaa-Xaa-Asp-|- with a hydrophobic amino-acid residue at P2 and a hydrophilic amino-acid residue at P3, although Val or Ala are also accepted at this position.. With respect to regulation, inhibited by BIRC6; following inhibition of BIRC6-caspase binding by DIABLO/SMAC, BIRC6 is subjected to caspase cleavage, leading to an increase in active caspases. Its function is as follows. Involved in the activation cascade of caspases responsible for apoptosis execution. At the onset of apoptosis, it proteolytically cleaves poly(ADP-ribose) polymerase PARP1 at a '216-Asp-|-Gly-217' bond. Cleaves and activates sterol regulatory element binding proteins (SREBPs) between the basic helix-loop-helix leucine zipper domain and the membrane attachment domain. Cleaves and activates caspase-6, -7 and -9 (CASP6, CASP7 and CASP9, respectively). Cleaves and inactivates interleukin-18 (IL18). Triggers cell adhesion in sympathetic neurons through RET cleavage. Cleaves IL-1 beta between an Asp and an Ala, releasing the mature cytokine which is involved in a variety of inflammatory processes. Cleaves and inhibits serine/threonine-protein kinase AKT1 in response to oxidative stress. Acts as an inhibitor of type I interferon production during virus-induced apoptosis by mediating cleavage of antiviral proteins CGAS, IRF3 and MAVS, thereby preventing cytokine overproduction. Also involved in pyroptosis by mediating cleavage and activation of gasdermin-E (GSDME). Cleaves XRCC4 and phospholipid scramblase proteins XKR4, XKR8 and XKR9, leading to promote phosphatidylserine exposure on apoptotic cell surface. Cleaves BIRC6 following inhibition of BIRC6-caspase binding by DIABLO/SMAC. The protein is Caspase-3 (CASP3) of Canis lupus familiaris (Dog).